We begin with the raw amino-acid sequence, 402 residues long: Rubredoxin-oxygen oxidoreductase (402 aa).

The tract at residues 30-216 (PMGTTYNAYL…KAIETLVGAG (187 aa)) is zinc metallo-hydrolase. H79, E81, D83, H146, D165, and H226 together coordinate Fe cation. The 139-residue stretch at 255 to 393 (VVIFYDSMWH…QLKTMAQTIA (139 aa)) folds into the Flavodoxin-like domain.

The protein in the N-terminal section; belongs to the zinc metallo-hydrolase group 3 family. As to quaternary structure, homodimer. The cofactor is FMN. Requires Fe cation as cofactor.

It functions in the pathway energy metabolism; electron transfer. In terms of biological role, catalyzes the four-electron reduction of one oxygen molecule to two water molecules. The polypeptide is Rubredoxin-oxygen oxidoreductase (roo) (Megalodesulfovibrio gigas (strain ATCC 19364 / DSM 1382 / NCIMB 9332 / VKM B-1759) (Desulfovibrio gigas)).